Here is a 196-residue protein sequence, read N- to C-terminus: C-type lectin domain family 2 member F (196 aa).

The tract at residues 1-21 (MNAQCLKKPEEGESSPGTGDK) is disordered. The Cytoplasmic portion of the chain corresponds to 1–41 (MNAQCLKKPEEGESSPGTGDKILQRNSLRAISPESSAKLYC). A helical; Signal-anchor for type II membrane protein membrane pass occupies residues 42–62 (CCGVIMVLTVAVVALSVALPA). At 63–196 (TKTEQILINK…SRSSNYMLQC (134 aa)) the chain is on the extracellular side. C77 and C88 are oxidised to a cystine. Residues 84-187 (VGNKCFYFSE…DYIPRKWICS (104 aa)) form the C-type lectin domain. N-linked (GlcNAc...) asparagine glycosylation is present at N97. Residues C105 and C186 are joined by a disulfide bond.

It localises to the cell membrane. Its function is as follows. Lectin-type cell surface receptor. The polypeptide is C-type lectin domain family 2 member F (Clec2f) (Mus musculus (Mouse)).